The chain runs to 211 residues: Ribonuclease HII (211 aa).

An RNase H type-2 domain is found at 16–205; that stretch reads APVCGVDEAG…VKAALAAAAV (190 aa). A divalent metal cation contacts are provided by Asp-22, Glu-23, and Asp-114.

It belongs to the RNase HII family. Requires Mn(2+) as cofactor. It depends on Mg(2+) as a cofactor.

The protein localises to the cytoplasm. The catalysed reaction is Endonucleolytic cleavage to 5'-phosphomonoester.. In terms of biological role, endonuclease that specifically degrades the RNA of RNA-DNA hybrids. The chain is Ribonuclease HII (rnhB) from Caulobacter vibrioides (strain ATCC 19089 / CIP 103742 / CB 15) (Caulobacter crescentus).